Consider the following 371-residue polypeptide: Cytochrome b (371 aa).

4 consecutive transmembrane segments (helical) span residues 25 to 45, 69 to 90, 105 to 125, and 170 to 190; these read FGSM…FLAV, WMMQ…YIHI, WMSG…GYVL, and FFAL…LHII. Heme b is bound by residues His75 and His89. Residues His174 and His188 each coordinate heme b. Position 193 (His193) interacts with a ubiquinone. 4 consecutive transmembrane segments (helical) span residues 218–238, 280–300, 312–332, and 339–358; these read HKDL…VSFS, LGGA…PFTH, LSQL…WAAT, and FIII…LSIP.

This sequence belongs to the cytochrome b family. In terms of assembly, the cytochrome bc1 complex contains 3 respiratory subunits (MT-CYB, CYC1 and UQCRFS1), 2 core proteins (UQCRC1 and UQCRC2) and probably 6 low-molecular weight proteins. The cofactor is heme b.

It localises to the mitochondrion inner membrane. In terms of biological role, component of the ubiquinol-cytochrome c reductase complex (complex III or cytochrome b-c1 complex) that is part of the mitochondrial respiratory chain. The b-c1 complex mediates electron transfer from ubiquinol to cytochrome c. Contributes to the generation of a proton gradient across the mitochondrial membrane that is then used for ATP synthesis. This is Cytochrome b (MT-CYB) from Antaresia childreni (Children's python).